We begin with the raw amino-acid sequence, 549 residues long: uncharacterized protein (549 aa).

12 helical membrane passes run 1-21 (MEIF…GVVT), 28-48 (IPLP…TFGL), 50-70 (VEFD…FADG), 85-105 (IFGL…FLIY), 106-126 (WVVP…LSPT), 165-185 (FAVA…TVEF), 187-207 (KVAI…GRSL), 222-242 (IVLL…IGVS), 278-298 (LEFV…PGIL), 310-330 (NVEI…LMLV), 361-381 (ILIA…VLSI), and 398-418 (VFLA…MLPI).

Belongs to the monovalent cation:proton antiporter 1 (CPA1) transporter (TC 2.A.36) family.

The protein resides in the cell inner membrane. This is an uncharacterized protein from Escherichia coli (strain K12).